Reading from the N-terminus, the 432-residue chain is Solute carrier family 38 member 8 (432 aa).

11 helical membrane-spanning segments follow: residues 29-49, 59-79, 103-123, 144-164, 175-195, 215-237, 253-273, 292-312, 345-365, 368-388, and 409-429; these read AVFI…PWAF, FLVA…LGYA, LCEI…LRVI, AAQN…LSAL, ILGT…YYLW, VFSV…SIYC, LSLL…FLTF, IIVA…IVLF, LPLT…LPDL, IISI…GLCL, and GILS…VAMV.

The protein belongs to the amino acid/polyamine transporter 2 family. In terms of tissue distribution, expressed in neurons located in the gray matter. Highly expressed in thalamus, hypothalamus, amygdala and pons. Expressed in the CA3 area of hippocampus and in the Purkinje layer of the cerebellum (at protein level). Expressed in the eye.

It localises to the membrane. Its subcellular location is the cytoplasm. It is found in the cell cortex. The protein resides in the cell projection. The protein localises to the axon. The catalysed reaction is L-glutamine(out) = L-glutamine(in). The enzyme catalyses L-alanine(in) = L-alanine(out). It catalyses the reaction L-histidine(out) = L-histidine(in). It carries out the reaction L-aspartate(out) = L-aspartate(in). The catalysed reaction is L-arginine(in) = L-arginine(out). The enzyme catalyses L-leucine(in) = L-leucine(out). Functionally, electrogenic sodium-dependent amino acid transporter with a preference for L-glutamine, L-alanine, L-histidine, L-aspartate and L-arginine. May facilitate glutamine uptake in both excitatory and inhibitory neurons. The transport mechanism and stoichiometry remain to be elucidated. This chain is Solute carrier family 38 member 8, found in Mus musculus (Mouse).